We begin with the raw amino-acid sequence, 142 residues long: HTH-type transcriptional regulator MntR (142 aa).

The 63-residue stretch at 1 to 63 folds into the HTH dtxR-type domain; sequence MPTPSMEDYI…YEKYRGLVLT (63 aa). Residues D8, E11, H77, E99, E102, and H103 each coordinate Mn(2+).

This sequence belongs to the DtxR/MntR family. In terms of assembly, homodimer.

It is found in the cytoplasm. With respect to regulation, DNA binding is strongly activated by Mn(2+). Functionally, central regulator of manganese homeostasis. In Bacillus cytotoxicus (strain DSM 22905 / CIP 110041 / 391-98 / NVH 391-98), this protein is HTH-type transcriptional regulator MntR.